Here is a 179-residue protein sequence, read N- to C-terminus: Large ribosomal subunit protein uL5 (179 aa).

The protein belongs to the universal ribosomal protein uL5 family. As to quaternary structure, part of the 50S ribosomal subunit; part of the 5S rRNA/L5/L18/L25 subcomplex. Contacts the 5S rRNA and the P site tRNA. Forms a bridge to the 30S subunit in the 70S ribosome.

Functionally, this is one of the proteins that bind and probably mediate the attachment of the 5S RNA into the large ribosomal subunit, where it forms part of the central protuberance. In the 70S ribosome it contacts protein S13 of the 30S subunit (bridge B1b), connecting the 2 subunits; this bridge is implicated in subunit movement. Contacts the P site tRNA; the 5S rRNA and some of its associated proteins might help stabilize positioning of ribosome-bound tRNAs. In Serratia proteamaculans (strain 568), this protein is Large ribosomal subunit protein uL5.